The sequence spans 491 residues: Probable glycine dehydrogenase (decarboxylating) subunit 2 (491 aa).

Residue K264 is modified to N6-(pyridoxal phosphate)lysine.

The protein belongs to the GcvP family. C-terminal subunit subfamily. The glycine cleavage system is composed of four proteins: P, T, L and H. In this organism, the P 'protein' is a heterodimer of two subunits. Pyridoxal 5'-phosphate serves as cofactor.

It catalyses the reaction N(6)-[(R)-lipoyl]-L-lysyl-[glycine-cleavage complex H protein] + glycine + H(+) = N(6)-[(R)-S(8)-aminomethyldihydrolipoyl]-L-lysyl-[glycine-cleavage complex H protein] + CO2. In terms of biological role, the glycine cleavage system catalyzes the degradation of glycine. The P protein binds the alpha-amino group of glycine through its pyridoxal phosphate cofactor; CO(2) is released and the remaining methylamine moiety is then transferred to the lipoamide cofactor of the H protein. This chain is Probable glycine dehydrogenase (decarboxylating) subunit 2, found in Coxiella burnetii (strain Dugway 5J108-111).